We begin with the raw amino-acid sequence, 280 residues long: Nocamycin O-methyltransferase (280 aa).

Belongs to the methyltransferase superfamily.

It catalyses the reaction nocamycin E + S-adenosyl-L-methionine = nocamycin I + S-adenosyl-L-homocysteine. It functions in the pathway antibiotic biosynthesis. Its function is as follows. Involved in the biosynthesis of nocamycin I and nocamycin II. Catalyzes the methylation of nocamycin E to yield nocamycin I. The chain is Nocamycin O-methyltransferase from Saccharothrix syringae (Nocardiopsis syringae).